The following is a 453-amino-acid chain: Homogentisate 1,2-dioxygenase (453 aa).

Positions 1–42 are disordered; the sequence is MLEKAEKQRRAGSGQQRAAGYMPGFGNDFETESLPGALPQGQ. Histidine 306 serves as the catalytic Proton acceptor. Residues histidine 349 and glutamate 355 each coordinate Fe cation. The homogentisate site is built by tyrosine 364 and histidine 385. Histidine 385 contacts Fe cation.

The protein belongs to the homogentisate dioxygenase family. As to quaternary structure, hexamer; dimer of trimers. The cofactor is Fe cation.

It carries out the reaction homogentisate + O2 = 4-maleylacetoacetate + H(+). It participates in amino-acid degradation; L-phenylalanine degradation; acetoacetate and fumarate from L-phenylalanine: step 4/6. Involved in the catabolism of homogentisate (2,5-dihydroxyphenylacetate or 2,5-OH-PhAc), a central intermediate in the degradation of phenylalanine and tyrosine. Catalyzes the oxidative ring cleavage of the aromatic ring of homogentisate to yield maleylacetoacetate. In Rhizobium meliloti (strain 1021) (Ensifer meliloti), this protein is Homogentisate 1,2-dioxygenase.